A 416-amino-acid polypeptide reads, in one-letter code: 3-hydroxy-3-methylglutaryl coenzyme A reductase AN1593 (416 aa).

The active-site Charge relay system is the E103. A glycan (N-linked (GlcNAc...) asparagine) is linked at N167. The active-site Charge relay system is the K236. N277 is a glycosylation site (N-linked (GlcNAc...) asparagine). D312 acts as the Charge relay system in catalysis. The chain crosses the membrane as a helical span at residues 380–400 (LALLVAAGVLAGELSLCSALS). Catalysis depends on H408, which acts as the Proton donor.

Belongs to the HMG-CoA reductase family.

The protein localises to the membrane. The catalysed reaction is (R)-mevalonate + 2 NADP(+) + CoA = (3S)-3-hydroxy-3-methylglutaryl-CoA + 2 NADPH + 2 H(+). It participates in metabolic intermediate biosynthesis; (R)-mevalonate biosynthesis; (R)-mevalonate from acetyl-CoA: step 3/3. Its function is as follows. 3-hydroxy-3-methylglutaryl coenzyme A reductase; part of the gene cluster that mediates the biosynthesis of the diterpene ent-pimara-8(14),15-diene (PD). Within the cluster, the HMG-CoA reductase AN1593 functions in the mevalonate pathway, which produces isoprenoid precursors. The geranylgeranyl pyrophosphate (GGPP) synthase AN1592 is needed in the formation of GGPP, the precursor for diterpenes. Lastly, the pimaradiene synthase pbcA performs the 2 cyclization steps that convert GGPP to ent-pimara-8(14),15-diene. The putative roles of the remaining cluster enzymes in ent-pimara-8(14),15-diene biosynthesis is unclear. The cytochrome P450 monooxygenase AN1598, the glutathione S-transferase AN1595, the oxidoreductases AN1596 and AN1597 probably function as decorative enzymes. It is possible that in biological conditions the compound is oxidized to ent-pimara-8(14),15-dien-19-oic acid, which is a bioactive diterpene compound predominant in many plant extracts. The sequence is that of 3-hydroxy-3-methylglutaryl coenzyme A reductase AN1593 from Emericella nidulans (strain FGSC A4 / ATCC 38163 / CBS 112.46 / NRRL 194 / M139) (Aspergillus nidulans).